A 517-amino-acid chain; its full sequence is ATP synthase subunit alpha 1 (517 aa).

Residue 174–181 (GDRQTGKT) participates in ATP binding.

Belongs to the ATPase alpha/beta chains family. F-type ATPases have 2 components, CF(1) - the catalytic core - and CF(0) - the membrane proton channel. CF(1) has five subunits: alpha(3), beta(3), gamma(1), delta(1), epsilon(1). CF(0) has three main subunits: a(1), b(2) and c(9-12). The alpha and beta chains form an alternating ring which encloses part of the gamma chain. CF(1) is attached to CF(0) by a central stalk formed by the gamma and epsilon chains, while a peripheral stalk is formed by the delta and b chains.

It localises to the cell inner membrane. It carries out the reaction ATP + H2O + 4 H(+)(in) = ADP + phosphate + 5 H(+)(out). Its function is as follows. Produces ATP from ADP in the presence of a proton gradient across the membrane. The alpha chain is a regulatory subunit. This chain is ATP synthase subunit alpha 1, found in Polaromonas naphthalenivorans (strain CJ2).